Reading from the N-terminus, the 497-residue chain is Peptidoglycan endopeptidase RipA (497 aa).

Residues 1–39 form the signal peptide; the sequence is MRRTVRALATRVHGRVCAVPLVVGMLLATALYGGGPAAA. Positions 177-192 are enriched in basic and acidic residues; the sequence is ARLAKEKADQAARDAE. Disordered regions lie at residues 177-198 and 253-297; these read ARLA…QDNA and APAA…GQNW. Over residues 255–273 the composition is skewed to pro residues; the sequence is AAAPAPVPNSAPAPVPGAQ. Residues 365–497 enclose the NlpC/P60 domain; it reads REAVEYVIRR…TPYVTRLIEY (133 aa). C408 (nucleophile) is an active-site residue. H457 functions as the Proton acceptor in the catalytic mechanism. E469 is an active-site residue.

This sequence belongs to the peptidase C40 family. Monomer.

The protein localises to the secreted. Functionally, peptidoglycan endopeptidase that cleaves the bond between D-glutamate and meso-diaminopimelate. Binds and degrades high-molecular weight peptidoglycan. Required for normal separation of daughter cells after cell division and for cell wall integrity. The protein is Peptidoglycan endopeptidase RipA (ripA) of Mycolicibacterium smegmatis (strain ATCC 700084 / mc(2)155) (Mycobacterium smegmatis).